We begin with the raw amino-acid sequence, 527 residues long: Serine/threonine-protein kinase CHK1 (527 aa).

The 267-residue stretch at 15–281 (VVLGDTVGQG…LKALKLHPWV (267 aa)) folds into the Protein kinase domain. ATP is bound by residues 21-29 (VGQGAFACV) and Lys-45. Asp-142 (proton acceptor) is an active-site residue.

The protein belongs to the protein kinase superfamily. CAMK Ser/Thr protein kinase family. NIM1 subfamily.

The protein resides in the nucleus. The catalysed reaction is L-seryl-[protein] + ATP = O-phospho-L-seryl-[protein] + ADP + H(+). The enzyme catalyses L-threonyl-[protein] + ATP = O-phospho-L-threonyl-[protein] + ADP + H(+). In terms of biological role, serine/threonine-protein kinase which is required for checkpoint-mediated cell cycle arrest and activation of DNA repair in response to the presence of DNA damage or unreplicated DNA. May also negatively regulate cell cycle progression during unperturbed cell cycles. Controls phosphorylation and abundance of PDS1 to prevent anaphase entry. Also helps prevent mitotic exit. The protein is Serine/threonine-protein kinase CHK1 (CHK1) of Saccharomyces cerevisiae (strain ATCC 204508 / S288c) (Baker's yeast).